The primary structure comprises 938 residues: MPAVSKGEGMRGLAVFISDIRNCKSKEAEIKRINKELANIRSKFKGDKALDGYSKKKYVCKLLFIFLLGHDIDFGHMEAVNLLSSNRYTEKQIGYLFISVLVNSNSELIRLINNAIKNDLASRNPTFMGLALHCIANVGSREMAEAFAGEIPKILVAGDTMDSVKQSAALCLLRLYRTSPDLVPMGDWTSRVVHLLNDQHLGVVTAATSLITTLAQKNPEEFKTSVSLAVSRLSRIVTSASTDLQDYTYYFVPAPWLSVKLLRLLQCYPPPDPAVRGRLTECLETILNKAQEPPKSKKVQHSNAKNAVLFEAISLIIHHDSEPNLLVRACNQLGQFLQHRETNLRYLALESMCTLASSEFSHEAVKTHIETVINALKTERDVSVRQRAVDLLYAMCDRSNAQQIVAEMLSYLETADYSIREEIVLKVAILAEKYAVDYTWYVDTILNLIRIAGDYVSEEVWYRVIQIVINRDDVQGYAAKTVFEALQAPACHENLVKVGGYILGEFGNLIAGDPRSSPLIQFNLLHSKFHLCSVPTRALLLSTYIKFVNLFPEVKATIQDVLRSDSQLKNADVELQQRAVEYLRLSTVASTDILATVLEEMPPFPERESSILAKLKKKKGPSTVTDLEETKRERSIDVNGGPEPVPASTSAASTPSPSADLLGLGAVPPAPTGPPPSSGGGLLVDVFSDSASAVAPLAPGSEDNFARFVCKNNGVLFENQLLQIGLKSEFRQNLGRMFIFYGNKTSTQFLNFTPTLICADDLQTNLNLQTKPVDPTVDGGAQVQQVINIECISDFTEAPVLNIQFRYGGTFQNVSVKLPITLNKFFQPTEMASQDFFQRWKQLSNPQQEVQNIFKAKHPMDTEITKAKIIGFGSALLEEVDPNPANFVGAGIIHTKTTQIGCLLRLEPNLQAQMYRLTLRTSKDTVSQRLCELLSEQF.

A 1,2-diacyl-sn-glycero-3-phospho-(1D-myo-inositol-3,4,5-trisphosphate)-binding positions include 11 to 12 (RG), Lys43, Tyr53, and 57 to 61 (KYVCK). The disordered stretch occupies residues 615–681 (LKKKKGPSTV…TGPPPSSGGG (67 aa)). The span at 646–667 (PASTSAASTPSPSADLLGLGAV) shows a compositional bias: low complexity. Positions 668 to 677 (PPAPTGPPPS) are enriched in pro residues.

It belongs to the adaptor complexes large subunit family. In terms of assembly, adaptor protein complex 2 (AP-2) is a heterotetramer composed of two large adaptins (alpha-type subunit AP2A1 or AP2A2 and beta-type subunit AP2B1), a medium adaptin (mu-type subunit AP2M1) and a small adaptin (sigma-type subunit AP2S1). Interacts with clathrin. Binds EPN1, EPS15, AMPH, SNAP91 and BIN1. Interacts with HIP1. Interacts with DGKD. Interacts with DENND1A, DENND1B and DENND1C. Interacts with FCHO1 and DAB2. Interacts with ATAT1; this interaction is required for efficient alpha-tubulin acetylation by ATAT1. Interacts with KIAA1107. Together with AP2B1 and AP2M1, it interacts with ADAM10; this interaction facilitates ADAM10 endocytosis from the plasma membrane during long-term potentiation in hippocampal neurons. Interacts with CLN3 (via dileucine motif). Interacts with ABCB11; this interaction regulates cell membrane expression of ABCB11 through its internalization in a clathrin-dependent manner and its subsequent degradation. Interacts with Cacfd1. Interacts with DNAJC6. Widely expressed.

Its subcellular location is the cell membrane. The protein localises to the membrane. It localises to the coated pit. In terms of biological role, component of the adaptor protein complex 2 (AP-2). Adaptor protein complexes function in protein transport via transport vesicles in different membrane traffic pathways. Adaptor protein complexes are vesicle coat components and appear to be involved in cargo selection and vesicle formation. AP-2 is involved in clathrin-dependent endocytosis in which cargo proteins are incorporated into vesicles surrounded by clathrin (clathrin-coated vesicles, CCVs) which are destined for fusion with the early endosome. The clathrin lattice serves as a mechanical scaffold but is itself unable to bind directly to membrane components. Clathrin-associated adaptor protein (AP) complexes which can bind directly to both the clathrin lattice and to the lipid and protein components of membranes are considered to be the major clathrin adaptors contributing the CCV formation. AP-2 also serves as a cargo receptor to selectively sort the membrane proteins involved in receptor-mediated endocytosis. AP-2 seems to play a role in the recycling of synaptic vesicle membranes from the presynaptic surface. AP-2 recognizes Y-X-X-[FILMV] (Y-X-X-Phi) and [ED]-X-X-X-L-[LI] endocytosis signal motifs within the cytosolic tails of transmembrane cargo molecules. AP-2 may also play a role in maintaining normal post-endocytic trafficking through the ARF6-regulated, non-clathrin pathway. During long-term potentiation in hippocampal neurons, AP-2 is responsible for the endocytosis of ADAM10. The AP-2 alpha subunit binds polyphosphoinositide-containing lipids, positioning AP-2 on the membrane. The AP-2 alpha subunit acts via its C-terminal appendage domain as a scaffolding platform for endocytic accessory proteins. The AP-2 alpha and AP-2 sigma subunits are thought to contribute to the recognition of the [ED]-X-X-X-L-[LI] motif. This Rattus norvegicus (Rat) protein is AP-2 complex subunit alpha-2.